Here is a 598-residue protein sequence, read N- to C-terminus: NADH-quinone oxidoreductase subunit C/D (598 aa).

The tract at residues 1 to 189 (MTDQIAQNSA…DPYVLTKQKE (189 aa)) is NADH dehydrogenase I subunit C. The segment at 213–598 (DFMFLNLGPN…IDFVMSDVDR (386 aa)) is NADH dehydrogenase I subunit D.

It in the N-terminal section; belongs to the complex I 30 kDa subunit family. In the C-terminal section; belongs to the complex I 49 kDa subunit family. In terms of assembly, NDH-1 is composed of 13 different subunits. Subunits NuoB, CD, E, F, and G constitute the peripheral sector of the complex.

It localises to the cell inner membrane. The enzyme catalyses a quinone + NADH + 5 H(+)(in) = a quinol + NAD(+) + 4 H(+)(out). Functionally, NDH-1 shuttles electrons from NADH, via FMN and iron-sulfur (Fe-S) centers, to quinones in the respiratory chain. The immediate electron acceptor for the enzyme in this species is believed to be ubiquinone. Couples the redox reaction to proton translocation (for every two electrons transferred, four hydrogen ions are translocated across the cytoplasmic membrane), and thus conserves the redox energy in a proton gradient. The protein is NADH-quinone oxidoreductase subunit C/D of Proteus mirabilis (strain HI4320).